The primary structure comprises 365 residues: Probable dual-specificity RNA methyltransferase RlmN (365 aa).

Glu106 acts as the Proton acceptor in catalysis. Residues 112–352 enclose the Radical SAM core domain; sequence YPDRVTLCVS…VTVRDTRGRE (241 aa). Cys119 and Cys357 are disulfide-bonded. 3 residues coordinate [4Fe-4S] cluster: Cys126, Cys130, and Cys133. S-adenosyl-L-methionine is bound by residues 181-182, Ser215, 238-240, and Asn314; these read GE and SLH. The active-site S-methylcysteine intermediate is the Cys357.

This sequence belongs to the radical SAM superfamily. RlmN family. [4Fe-4S] cluster is required as a cofactor.

Its subcellular location is the cytoplasm. The catalysed reaction is adenosine(2503) in 23S rRNA + 2 reduced [2Fe-2S]-[ferredoxin] + 2 S-adenosyl-L-methionine = 2-methyladenosine(2503) in 23S rRNA + 5'-deoxyadenosine + L-methionine + 2 oxidized [2Fe-2S]-[ferredoxin] + S-adenosyl-L-homocysteine. It catalyses the reaction adenosine(37) in tRNA + 2 reduced [2Fe-2S]-[ferredoxin] + 2 S-adenosyl-L-methionine = 2-methyladenosine(37) in tRNA + 5'-deoxyadenosine + L-methionine + 2 oxidized [2Fe-2S]-[ferredoxin] + S-adenosyl-L-homocysteine. Functionally, specifically methylates position 2 of adenine 2503 in 23S rRNA and position 2 of adenine 37 in tRNAs. The chain is Probable dual-specificity RNA methyltransferase RlmN from Thermobifida fusca (strain YX).